The sequence spans 146 residues: Cystatin-C (146 aa).

An N-terminal signal peptide occupies residues 1–26 (MAGPLRAPLLLLAILAVALAVSPAAG). At Ser43 the chain carries Phosphoserine. Residues 81–85 (QIVAG) carry the Secondary area of contact motif. 2 disulfides stabilise this stretch: Cys99–Cys109 and Cys123–Cys143.

The protein belongs to the cystatin family.

It is found in the secreted. Functionally, as an inhibitor of cysteine proteinases, this protein is thought to serve an important physiological role as a local regulator of this enzyme activity. The protein is Cystatin-C (CST3) of Macaca mulatta (Rhesus macaque).